Reading from the N-terminus, the 143-residue chain is Large ribosomal subunit protein uL11 (143 aa).

This sequence belongs to the universal ribosomal protein uL11 family. As to quaternary structure, part of the ribosomal stalk of the 50S ribosomal subunit. Interacts with L10 and the large rRNA to form the base of the stalk. L10 forms an elongated spine to which L12 dimers bind in a sequential fashion forming a multimeric L10(L12)X complex. Post-translationally, one or more lysine residues are methylated.

Forms part of the ribosomal stalk which helps the ribosome interact with GTP-bound translation factors. The polypeptide is Large ribosomal subunit protein uL11 (Psychrobacter cryohalolentis (strain ATCC BAA-1226 / DSM 17306 / VKM B-2378 / K5)).